Here is a 745-residue protein sequence, read N- to C-terminus: Copper-transporting ATPase (745 aa).

Residues 1-67 enclose the HMA domain; the sequence is MKESFYIEGM…LIEKLGYSPK (67 aa). The Cytoplasmic segment spans residues 1–83; it reads MKESFYIEGM…KKEFFSPNVK (83 aa). Cu cation contacts are provided by Cys12 and Cys15. The helical transmembrane segment at 84–104 threads the bilayer; that stretch reads LALAVIFTLFVVYLSMGAMLS. Residues 105–124 are Extracellular-facing; the sequence is PSLLPESLLTINHHSNFLNA. Residues 125–144 traverse the membrane as a helical segment; that stretch reads CLQLIGALIVMHLGRDFYIQ. Residues 145 to 151 lie on the Cytoplasmic side of the membrane; sequence GFKALWH. The helical transmembrane segment at 152-172 threads the bilayer; sequence RQPNMSSLIAIGTSAALISSL. Topologically, residues 173–194 are extracellular; that stretch reads WQLYLVYTNHYTDQWSYGHYYF. A helical transmembrane segment spans residues 195–215; the sequence is ESVCVILMFVMVGKRIENVSK. Topologically, residues 216–343 are cytoplasmic; sequence DKALDAMQAL…KAEISRLADK (128 aa). The helical transmembrane segment at 344–366 threads the bilayer; sequence VSSVFVPSVIAIAVLAFVVWLII. Over 367-379 the chain is Extracellular; the sequence is APKPDFWWNFRTA. Residues 380-397 traverse the membrane as a helical segment; the sequence is LEVFVSVLVISCPCALGL. Topologically, residues 398–685 are cytoplasmic; sequence ATPMSILVAN…KLSQATIKNI (288 aa). The active-site 4-aspartylphosphate intermediate is the Asp435. Mg(2+)-binding residues include Asp631 and Asp635. The helical transmembrane segment at 686 to 705 threads the bilayer; that stretch reads KENLFWAFCYNSVFIPLACG. Residues 706–716 lie on the Extracellular side of the membrane; sequence VLYKANIMLSP. The helical transmembrane segment at 717–735 threads the bilayer; the sequence is AIAGLAMSLSSVSVVLNSQ. Topologically, residues 736–745 are cytoplasmic; sequence RLRNFKIKDH.

Belongs to the cation transport ATPase (P-type) (TC 3.A.3) family. Type IB subfamily.

The protein localises to the cell membrane. The enzyme catalyses Cu(2+)(in) + ATP + H2O = Cu(2+)(out) + ADP + phosphate + H(+). Probably involved in copper export. The protein is Copper-transporting ATPase (copA) of Helicobacter pylori (strain J99 / ATCC 700824) (Campylobacter pylori J99).